The chain runs to 472 residues: 3-isopropylmalate dehydratase large subunit (472 aa).

Cysteine 352, cysteine 412, and cysteine 415 together coordinate [4Fe-4S] cluster.

The protein belongs to the aconitase/IPM isomerase family. LeuC type 1 subfamily. In terms of assembly, heterodimer of LeuC and LeuD. The cofactor is [4Fe-4S] cluster.

The catalysed reaction is (2R,3S)-3-isopropylmalate = (2S)-2-isopropylmalate. It participates in amino-acid biosynthesis; L-leucine biosynthesis; L-leucine from 3-methyl-2-oxobutanoate: step 2/4. Functionally, catalyzes the isomerization between 2-isopropylmalate and 3-isopropylmalate, via the formation of 2-isopropylmaleate. The polypeptide is 3-isopropylmalate dehydratase large subunit (Roseiflexus castenholzii (strain DSM 13941 / HLO8)).